The chain runs to 358 residues: 4-hydroxybenzoate polyprenyltransferase, mitochondrial (358 aa).

The transit peptide at 1 to 20 (MIIKPIASPARYFLRTPSWS) directs the protein to the mitochondrion. 7 consecutive transmembrane segments (helical) span residues 76–96 (TGTYLLYSPCTWSILMAAYAY), 107–127 (LALFGVGSFLMRSAGCVINDL), 154–174 (AISLLSVQLTASLGILLQLNP), 202–222 (VVLGLTFGYGAVMGWPALAGE), 229–249 (VVAPLYLSTISWIVLYDTIYA), 275–295 (VLCGLAALQIATLATAGIMNG), and 336–356 (NTGYLVAAAIALDWLAKSFIY).

Belongs to the UbiA prenyltransferase family. Mg(2+) serves as cofactor.

It is found in the mitochondrion. Its subcellular location is the mitochondrion inner membrane. It catalyses the reaction an all-trans-polyprenyl diphosphate + 4-hydroxybenzoate = a 4-hydroxy-3-(all-trans-polyprenyl)benzoate + diphosphate. The protein operates within cofactor biosynthesis; ubiquinone biosynthesis. Catalyzes the prenylation of para-hydroxybenzoate (PHB) with an all-trans polyprenyl group. Mediates the second step in the final reaction sequence of coenzyme Q (CoQ) biosynthesis, which is the condensation of the polyisoprenoid side chain with PHB, generating the first membrane-bound Q intermediate. The protein is 4-hydroxybenzoate polyprenyltransferase, mitochondrial of Schizosaccharomyces pombe (strain 972 / ATCC 24843) (Fission yeast).